Here is a 987-residue protein sequence, read N- to C-terminus: Leucine--tRNA ligase (987 aa).

The 'HIGH' region motif lies at 69-80 (PYPSGKGLHVGH). The 'KMSKS' region motif lies at 760 to 764 (KMGKS). An ATP-binding site is contributed by Lys763.

Belongs to the class-I aminoacyl-tRNA synthetase family.

It is found in the cytoplasm. The catalysed reaction is tRNA(Leu) + L-leucine + ATP = L-leucyl-tRNA(Leu) + AMP + diphosphate. In Bifidobacterium longum (strain NCC 2705), this protein is Leucine--tRNA ligase.